Consider the following 178-residue polypeptide: Interleukin-10 (178 aa).

Residues 1–18 form the signal peptide; sequence MHSSALLCCLVVLTGVRA. Cystine bridges form between Cys-30–Cys-126 and Cys-80–Cys-132. A glycan (N-linked (GlcNAc...) asparagine) is linked at Asn-134.

This sequence belongs to the IL-10 family. In terms of assembly, homodimer. Interacts with IL10RA and IL10RB.

The protein resides in the secreted. Functionally, major immune regulatory cytokine that acts on many cells of the immune system where it has profound anti-inflammatory functions, limiting excessive tissue disruption caused by inflammation. Mechanistically, IL10 binds to its heterotetrameric receptor comprising IL10RA and IL10RB leading to JAK1 and STAT2-mediated phosphorylation of STAT3. In turn, STAT3 translocates to the nucleus where it drives expression of anti-inflammatory mediators. Targets antigen-presenting cells (APCs) such as macrophages and monocytes and inhibits their release of pro-inflammatory cytokines including granulocyte-macrophage colony-stimulating factor /GM-CSF, granulocyte colony-stimulating factor/G-CSF, IL-1 alpha, IL-1 beta, IL-6, IL-8 and TNF-alpha. Also interferes with antigen presentation by reducing the expression of MHC-class II and co-stimulatory molecules, thereby inhibiting their ability to induce T cell activation. In addition, controls the inflammatory response of macrophages by reprogramming essential metabolic pathways including mTOR signaling. In Papio hamadryas (Hamadryas baboon), this protein is Interleukin-10 (IL10).